Here is a 150-residue protein sequence, read N- to C-terminus: Phosphoribosyl-AMP cyclohydrolase (150 aa).

Mg(2+) is bound at residue aspartate 93. Cysteine 94 contacts Zn(2+). Mg(2+) is bound by residues aspartate 95 and aspartate 97. Residues cysteine 112 and cysteine 119 each coordinate Zn(2+).

It belongs to the PRA-CH family. Homodimer. Mg(2+) serves as cofactor. Zn(2+) is required as a cofactor.

Its subcellular location is the cytoplasm. It carries out the reaction 1-(5-phospho-beta-D-ribosyl)-5'-AMP + H2O = 1-(5-phospho-beta-D-ribosyl)-5-[(5-phospho-beta-D-ribosylamino)methylideneamino]imidazole-4-carboxamide. It participates in amino-acid biosynthesis; L-histidine biosynthesis; L-histidine from 5-phospho-alpha-D-ribose 1-diphosphate: step 3/9. In terms of biological role, catalyzes the hydrolysis of the adenine ring of phosphoribosyl-AMP. In Rhizobium etli (strain CIAT 652), this protein is Phosphoribosyl-AMP cyclohydrolase.